Reading from the N-terminus, the 641-residue chain is 1-deoxy-D-xylulose-5-phosphate synthase (641 aa).

Residues histidine 79 and 120 to 122 each bind thiamine diphosphate; that span reads GHS. Aspartate 151 provides a ligand contact to Mg(2+). Residues 152–153, asparagine 180, tyrosine 291, and glutamate 375 each bind thiamine diphosphate; that span reads GS. Asparagine 180 provides a ligand contact to Mg(2+).

The protein belongs to the transketolase family. DXPS subfamily. In terms of assembly, homodimer. Mg(2+) serves as cofactor. The cofactor is thiamine diphosphate.

It catalyses the reaction D-glyceraldehyde 3-phosphate + pyruvate + H(+) = 1-deoxy-D-xylulose 5-phosphate + CO2. It participates in metabolic intermediate biosynthesis; 1-deoxy-D-xylulose 5-phosphate biosynthesis; 1-deoxy-D-xylulose 5-phosphate from D-glyceraldehyde 3-phosphate and pyruvate: step 1/1. Catalyzes the acyloin condensation reaction between C atoms 2 and 3 of pyruvate and glyceraldehyde 3-phosphate to yield 1-deoxy-D-xylulose-5-phosphate (DXP). The polypeptide is 1-deoxy-D-xylulose-5-phosphate synthase (Nitratidesulfovibrio vulgaris (strain ATCC 29579 / DSM 644 / CCUG 34227 / NCIMB 8303 / VKM B-1760 / Hildenborough) (Desulfovibrio vulgaris)).